We begin with the raw amino-acid sequence, 290 residues long: Syntaxin-1A (290 aa).

Residues 1–21 (MTKDRLAALQAAQSDDEDMPE) form a disordered region. Residues 1–267 (MTKDRLAALQ…KYQSKARRKK (267 aa)) are Cytoplasmic-facing. Residues 194-256 (LADIEARHAD…QTATQDTKKA (63 aa)) enclose the t-SNARE coiled-coil homology domain. A helical; Anchor for type IV membrane protein membrane pass occupies residues 268–289 (IWIAICVLIAIIILVVFLAIYL). Residue Thr290 is a topological domain, vesicular.

It belongs to the syntaxin family. In terms of processing, (Microbial infection) Targeted and hydrolyzed by the light chain (LC) of P.bifermentans PMP1. Cleavage probably inhibits neurotransmitter release.

The protein resides in the cytoplasmic vesicle. Its subcellular location is the secretory vesicle. It is found in the synaptic vesicle membrane. In terms of biological role, plays a critical role in several secretory processes. This chain is Syntaxin-1A, found in Anopheles gambiae (African malaria mosquito).